Reading from the N-terminus, the 325-residue chain is Large ribosomal subunit protein uL1m (325 aa).

Residues 1-50 constitute a mitochondrion transit peptide; sequence MAAAVRCMGRALIHHQRHSLSKMVYQTSLCSCSVNIRVPNRHFAAATKSA.

It belongs to the universal ribosomal protein uL1 family. Component of the mitochondrial large ribosomal subunit (mt-LSU). Mature mammalian 55S mitochondrial ribosomes consist of a small (28S) and a large (39S) subunit. The 28S small subunit contains a 12S ribosomal RNA (12S mt-rRNA) and 30 different proteins. The 39S large subunit contains a 16S rRNA (16S mt-rRNA), a copy of mitochondrial valine transfer RNA (mt-tRNA(Val)), which plays an integral structural role, and 52 different proteins.

The protein localises to the mitochondrion. The protein is Large ribosomal subunit protein uL1m (MRPL1) of Homo sapiens (Human).